The primary structure comprises 865 residues: Alanine--tRNA ligase (865 aa).

Zn(2+) contacts are provided by H554, H558, C656, and H660.

This sequence belongs to the class-II aminoacyl-tRNA synthetase family. It depends on Zn(2+) as a cofactor.

It is found in the cytoplasm. The enzyme catalyses tRNA(Ala) + L-alanine + ATP = L-alanyl-tRNA(Ala) + AMP + diphosphate. Functionally, catalyzes the attachment of alanine to tRNA(Ala) in a two-step reaction: alanine is first activated by ATP to form Ala-AMP and then transferred to the acceptor end of tRNA(Ala). Also edits incorrectly charged Ser-tRNA(Ala) and Gly-tRNA(Ala) via its editing domain. This Francisella tularensis subsp. novicida (strain U112) protein is Alanine--tRNA ligase.